The following is a 171-amino-acid chain: Translation initiation factor IF-3 (171 aa).

Belongs to the IF-3 family. Monomer.

Its subcellular location is the cytoplasm. Functionally, IF-3 binds to the 30S ribosomal subunit and shifts the equilibrium between 70S ribosomes and their 50S and 30S subunits in favor of the free subunits, thus enhancing the availability of 30S subunits on which protein synthesis initiation begins. In Thermus thermophilus (strain ATCC BAA-163 / DSM 7039 / HB27), this protein is Translation initiation factor IF-3.